A 324-amino-acid chain; its full sequence is Ribose-phosphate pyrophosphokinase (324 aa).

Residues Asn45–Glu47 and Arg104–Gln105 each bind ATP. His138 and Asp178 together coordinate Mg(2+). Lys201 is a catalytic residue. Residues Arg203, Asp229, and Asp233–Thr237 contribute to the D-ribose 5-phosphate site.

The protein belongs to the ribose-phosphate pyrophosphokinase family. Class I subfamily. Homohexamer. Mg(2+) serves as cofactor.

The protein localises to the cytoplasm. The catalysed reaction is D-ribose 5-phosphate + ATP = 5-phospho-alpha-D-ribose 1-diphosphate + AMP + H(+). It participates in metabolic intermediate biosynthesis; 5-phospho-alpha-D-ribose 1-diphosphate biosynthesis; 5-phospho-alpha-D-ribose 1-diphosphate from D-ribose 5-phosphate (route I): step 1/1. Its function is as follows. Involved in the biosynthesis of the central metabolite phospho-alpha-D-ribosyl-1-pyrophosphate (PRPP) via the transfer of pyrophosphoryl group from ATP to 1-hydroxyl of ribose-5-phosphate (Rib-5-P). The polypeptide is Ribose-phosphate pyrophosphokinase (Streptomyces avermitilis (strain ATCC 31267 / DSM 46492 / JCM 5070 / NBRC 14893 / NCIMB 12804 / NRRL 8165 / MA-4680)).